The sequence spans 437 residues: Vacuolar protein sorting-associated protein 4A (437 aa).

The MIT domain maps to threonine 2 to histidine 80. Lysine 8 is modified (N6-acetyllysine). Residues lysine 15–glutamate 37 are a coiled coil. A disordered region spans residues arginine 75–lysine 106. Residues proline 84–aspartate 96 are compositionally biased toward basic and acidic residues. Residues serine 95 and serine 97 each carry the phosphoserine modification. Glycine 167 to serine 174 contacts ATP.

The protein belongs to the AAA ATPase family. In terms of assembly, proposed to be monomeric or homodimeric in nucleotide-free form and to oligomerize upon binding to ATP to form two stacked hexameric or heptameric rings with a central pore through which ESCRT-III substrates are translocated in an ATP-dependent manner. Interacts with CHMP1A, CHMP1B, CHMP2A, CHMP2B, CHMP3, CHMP4A, CHMP4B, CHMP4C and CHMP6. Interacts with VPS4B; the interaction suggests a heteromeric assembly with VPS4B. Interacts with SPAST. Interacts with IST1. Interacts with ZFYVE19/ANCHR; leading to retain it at midbody. As to expression, highly expressed in testis and moderately in heart and brain. Not detected in spleen, lung, liver, skeletal muscle or kidney.

It is found in the late endosome membrane. The protein localises to the midbody. It localises to the cytoplasm. The protein resides in the cytoskeleton. Its subcellular location is the spindle. It catalyses the reaction ATP + H2O = ADP + phosphate + H(+). Functionally, involved in late steps of the endosomal multivesicular bodies (MVB) pathway. Recognizes membrane-associated ESCRT-III assemblies and catalyzes their disassembly, possibly in combination with membrane fission. Redistributes the ESCRT-III components to the cytoplasm for further rounds of MVB sorting. MVBs contain intraluminal vesicles (ILVs) that are generated by invagination and scission from the limiting membrane of the endosome and mostly are delivered to lysosomes enabling degradation of membrane proteins, such as stimulated growth factor receptors, lysosomal enzymes and lipids. It is required for proper accomplishment of various processes including the regulation of endosome size, primary cilium organization, mitotic spindle organization and chromosome segregation, and nuclear envelope sealing and spindle disassembly during anaphase. In conjunction with the ESCRT machinery also appears to function in topologically equivalent membrane fission events, such as the terminal stages of cytokinesis. Involved in cytokinesis: retained at the midbody by ZFYVE19/ANCHR and CHMP4C until abscission checkpoint signaling is terminated at late cytokinesis. It is then released following dephosphorylation of CHMP4C, leading to abscission. VPS4A/B are required for the exosomal release of SDCBP, CD63 and syndecan. Critical for normal erythroblast cytokinesis and correct erythropoiesis. In Mus musculus (Mouse), this protein is Vacuolar protein sorting-associated protein 4A.